The following is a 250-amino-acid chain: 23S rRNA (guanine(2535)-N(1))-methyltransferase (250 aa).

It catalyses the reaction guanosine(2535) in 23S rRNA + S-adenosyl-L-methionine = N(1)-methylguanosine(2535) in 23S rRNA + S-adenosyl-L-homocysteine + H(+). In terms of biological role, specifically methylates the guanine-2535 in 23S ribosomal RNA. Confers resistance to antibiotic avilamycin, an orthosomycin antibiotic. The chain is 23S rRNA (guanine(2535)-N(1))-methyltransferase (aviRa) from Streptomyces viridochromogenes.